Reading from the N-terminus, the 255-residue chain is Geranylgeranylglyceryl phosphate synthase (255 aa).

Residues Asp-25 and Ser-54 each contribute to the Mg(2+) site. Sn-glycerol 1-phosphate-binding positions include 173-179 (YLEGGSG), 203-204 (GG), and 225-226 (GT).

It belongs to the GGGP/HepGP synthase family. Group II subfamily. The cofactor is Mg(2+).

The protein resides in the cytoplasm. It catalyses the reaction sn-glycerol 1-phosphate + (2E,6E,10E)-geranylgeranyl diphosphate = sn-3-O-(geranylgeranyl)glycerol 1-phosphate + diphosphate. It participates in membrane lipid metabolism; glycerophospholipid metabolism. Prenyltransferase that catalyzes the transfer of the geranylgeranyl moiety of geranylgeranyl diphosphate (GGPP) to the C3 hydroxyl of sn-glycerol-1-phosphate (G1P). This reaction is the first ether-bond-formation step in the biosynthesis of archaeal membrane lipids. This chain is Geranylgeranylglyceryl phosphate synthase, found in Thermofilum pendens (strain DSM 2475 / Hrk 5).